The sequence spans 649 residues: L-ornithine N(5)-monooxygenase (649 aa).

FAD-binding positions include 72–80 (EKRGHFAWH) and Gln91. Residue Lys96 participates in substrate binding. Residue Val157 participates in FAD binding. NADP(+) contacts are provided by residues 289–292 (AGQS) and Arg314. Residues 328–331 (NSAA) and Asn359 contribute to the substrate site. 359 to 361 (NYS) lines the NADP(+) pocket. Residues 512–547 (AMQSDAVRSGKSSPGSGSDASSTSSQQTLASENSTE) form a disordered region. Low complexity predominate over residues 520-536 (SGKSSPGSGSDASSTSS). Residues 537-547 (QQTLASENSTE) show a composition bias toward polar residues. 569 to 571 (SLL) contacts FAD. Ser572 is a binding site for substrate. The segment at 585-611 (LLQRLPRTRRGTASSAATQPAASTVAS) is disordered. The span at 596-611 (TASSAATQPAASTVAS) shows a compositional bias: low complexity.

The protein belongs to the lysine N(6)-hydroxylase/L-ornithine N(5)-oxygenase family. As to quaternary structure, homotetramer. FAD serves as cofactor.

The catalysed reaction is L-ornithine + NADPH + O2 = N(5)-hydroxy-L-ornithine + NADP(+) + H2O. It catalyses the reaction L-ornithine + NADH + O2 = N(5)-hydroxy-L-ornithine + NAD(+) + H2O. Its pathway is siderophore biosynthesis; ferrichrome biosynthesis. Functionally, catalyzes the conversion of L-ornithine to N(5)-hydroxyornithine, the first step in the biosynthesis of all hydroxamate-containing siderophores, such as ferrichrome. The protein is L-ornithine N(5)-monooxygenase (SID1) of Mycosarcoma maydis (Corn smut fungus).